Consider the following 347-residue polypeptide: Dihydroorotate dehydrogenase (quinone) (347 aa).

FMN is bound by residues 62–66 and Thr-86; that span reads AGLDK. Substrate is bound at residue Lys-66. Substrate is bound at residue 111–115; it reads NRMGF. The FMN site is built by Asn-142 and Asn-175. Asn-175 is a substrate binding site. The Nucleophile role is filled by Ser-178. Asn-180 contacts substrate. FMN contacts are provided by Lys-220 and Thr-248. 249 to 250 is a binding site for substrate; it reads NT. FMN is bound by residues Gly-271, Gly-300, and 321-322; that span reads YS.

Belongs to the dihydroorotate dehydrogenase family. Type 2 subfamily. In terms of assembly, monomer. FMN serves as cofactor.

Its subcellular location is the cell membrane. It catalyses the reaction (S)-dihydroorotate + a quinone = orotate + a quinol. It functions in the pathway pyrimidine metabolism; UMP biosynthesis via de novo pathway; orotate from (S)-dihydroorotate (quinone route): step 1/1. Its function is as follows. Catalyzes the conversion of dihydroorotate to orotate with quinone as electron acceptor. The polypeptide is Dihydroorotate dehydrogenase (quinone) (Dechloromonas aromatica (strain RCB)).